Consider the following 421-residue polypeptide: MQDSIEQYMQKVGQQARDASRVLTSASTSLKNHALSAIYTALENNQAAILAANQIDMEKGRSNQLDSALLDRLELTPARFKGMLQGLKDVIALVDPIGEITDLAYRPTGIQIGKMRVPLGVVGMIYESRPNVTLEAASLAIKSGNAIILRGGSEALESNKAIAEAVKHGLKVAGLPEHSVQVIETSDRAAVGHLITMAEYVDVIVPRGGKSLIERVTNEARIPVIKHLDGNCHVFVEAQADLQKALPITLNAKTHRYGVCNAMETLLVDEKIAEVFLPHIAELYAEKQVELRGCPETRRILGSSVKPATEEDWYTEYLGPILAVKVVSGIDEAIDHINKYGSHHTDAIVTENYTLARQFLARVDSSSVVVNASTRFADGFEYGLGAEIGISTDKIHARGPVGLEGLTSQKWIVLGDGQIRQ.

This sequence belongs to the gamma-glutamyl phosphate reductase family.

It is found in the cytoplasm. The catalysed reaction is L-glutamate 5-semialdehyde + phosphate + NADP(+) = L-glutamyl 5-phosphate + NADPH + H(+). It participates in amino-acid biosynthesis; L-proline biosynthesis; L-glutamate 5-semialdehyde from L-glutamate: step 2/2. Catalyzes the NADPH-dependent reduction of L-glutamate 5-phosphate into L-glutamate 5-semialdehyde and phosphate. The product spontaneously undergoes cyclization to form 1-pyrroline-5-carboxylate. The chain is Gamma-glutamyl phosphate reductase from Acinetobacter baumannii (strain AYE).